We begin with the raw amino-acid sequence, 135 residues long: Large ribosomal subunit protein bL19 (135 aa).

The protein belongs to the bacterial ribosomal protein bL19 family.

In terms of biological role, this protein is located at the 30S-50S ribosomal subunit interface and may play a role in the structure and function of the aminoacyl-tRNA binding site. The protein is Large ribosomal subunit protein bL19 of Xanthomonas oryzae pv. oryzae (strain KACC10331 / KXO85).